An 86-amino-acid chain; its full sequence is Small ribosomal subunit protein bS20 (86 aa).

Belongs to the bacterial ribosomal protein bS20 family.

Its function is as follows. Binds directly to 16S ribosomal RNA. The protein is Small ribosomal subunit protein bS20 of Novosphingobium aromaticivorans (strain ATCC 700278 / DSM 12444 / CCUG 56034 / CIP 105152 / NBRC 16084 / F199).